A 117-amino-acid polypeptide reads, in one-letter code: Large ribosomal subunit protein bL20 (117 aa).

It belongs to the bacterial ribosomal protein bL20 family.

Its function is as follows. Binds directly to 23S ribosomal RNA and is necessary for the in vitro assembly process of the 50S ribosomal subunit. It is not involved in the protein synthesizing functions of that subunit. In Neorickettsia sennetsu (strain ATCC VR-367 / Miyayama) (Ehrlichia sennetsu), this protein is Large ribosomal subunit protein bL20.